A 480-amino-acid polypeptide reads, in one-letter code: tRNA (guanine(37)-N(1))-methyltransferase (480 aa).

Residues His-244, 292-293 (DL), 321-322 (DG), and Asn-342 each bind S-adenosyl-L-methionine.

This sequence belongs to the class I-like SAM-binding methyltransferase superfamily. TRM5/TYW2 family. Monomer.

The protein resides in the mitochondrion matrix. Its subcellular location is the nucleus. It localises to the cytoplasm. It carries out the reaction guanosine(37) in tRNA + S-adenosyl-L-methionine = N(1)-methylguanosine(37) in tRNA + S-adenosyl-L-homocysteine + H(+). In terms of biological role, specifically methylates the N1 position of guanosine-37 in various cytoplasmic and mitochondrial tRNAs. Methylation is not dependent on the nature of the nucleoside 5' of the target nucleoside. This is the first step in the biosynthesis of wybutosine (yW), a modified base adjacent to the anticodon of tRNAs and required for accurate decoding. The polypeptide is tRNA (guanine(37)-N(1))-methyltransferase (Thalassiosira pseudonana (Marine diatom)).